We begin with the raw amino-acid sequence, 483 residues long: Glutamyl-tRNA(Gln) amidotransferase subunit A (483 aa).

Residues lysine 75 and serine 150 each act as charge relay system in the active site. Serine 174 serves as the catalytic Acyl-ester intermediate.

This sequence belongs to the amidase family. GatA subfamily. In terms of assembly, heterotrimer of A, B and C subunits.

The catalysed reaction is L-glutamyl-tRNA(Gln) + L-glutamine + ATP + H2O = L-glutaminyl-tRNA(Gln) + L-glutamate + ADP + phosphate + H(+). Its function is as follows. Allows the formation of correctly charged Gln-tRNA(Gln) through the transamidation of misacylated Glu-tRNA(Gln) in organisms which lack glutaminyl-tRNA synthetase. The reaction takes place in the presence of glutamine and ATP through an activated gamma-phospho-Glu-tRNA(Gln). The polypeptide is Glutamyl-tRNA(Gln) amidotransferase subunit A (Legionella pneumophila subsp. pneumophila (strain Philadelphia 1 / ATCC 33152 / DSM 7513)).